The sequence spans 496 residues: Glutamate--tRNA ligase (496 aa).

A 'HIGH' region motif is present at residues 12–22; that stretch reads PSPTGTPHVGL. Positions 256–260 match the 'KMSKS' region motif; the sequence is KLSKR. Lysine 259 lines the ATP pocket.

This sequence belongs to the class-I aminoacyl-tRNA synthetase family. Glutamate--tRNA ligase type 1 subfamily. As to quaternary structure, monomer.

It localises to the cytoplasm. It carries out the reaction tRNA(Glu) + L-glutamate + ATP = L-glutamyl-tRNA(Glu) + AMP + diphosphate. Its function is as follows. Catalyzes the attachment of glutamate to tRNA(Glu) in a two-step reaction: glutamate is first activated by ATP to form Glu-AMP and then transferred to the acceptor end of tRNA(Glu). The sequence is that of Glutamate--tRNA ligase from Mycobacteroides abscessus (strain ATCC 19977 / DSM 44196 / CCUG 20993 / CIP 104536 / JCM 13569 / NCTC 13031 / TMC 1543 / L948) (Mycobacterium abscessus).